Reading from the N-terminus, the 328-residue chain is DhaKLM operon coactivator DhaQ (328 aa).

One can recognise a DhaK domain in the interval 6 to 328; it reads STNEIPEEML…LNVPTGAFAW (323 aa). Tele-(1,2,3-trihydroxypropan-2-yl)histidine is present on H215.

Homodimer. Interacts with a homodimer of DhaS.

Its function is as follows. Coactivator for the transcription factor DhaS. The heterotetramer formed by DhaQ and DhaS functions as a transcriptional regulator. Activated by covalent binding of dihydroxyacetone to DhaQ. The complex activates the dhaKLM operon. The chain is DhaKLM operon coactivator DhaQ (dhaQ) from Lactococcus lactis subsp. lactis (strain IL1403) (Streptococcus lactis).